Reading from the N-terminus, the 45-residue chain is Large ribosomal subunit protein bL36 (45 aa).

Residues 1 to 20 (MKVSSSIKADPSKGDKLVRR) form a disordered region.

The protein belongs to the bacterial ribosomal protein bL36 family.

In Chlamydia abortus (strain DSM 27085 / S26/3) (Chlamydophila abortus), this protein is Large ribosomal subunit protein bL36.